The sequence spans 115 residues: Large ribosomal subunit protein uL24 (115 aa).

It belongs to the universal ribosomal protein uL24 family. In terms of assembly, part of the 50S ribosomal subunit.

Functionally, one of two assembly initiator proteins, it binds directly to the 5'-end of the 23S rRNA, where it nucleates assembly of the 50S subunit. Its function is as follows. One of the proteins that surrounds the polypeptide exit tunnel on the outside of the subunit. This is Large ribosomal subunit protein uL24 from Aster yellows witches'-broom phytoplasma (strain AYWB).